The following is a 419-amino-acid chain: Probable serine/threonine-protein kinase CST (419 aa).

Gly2 is lipidated: N-myristoyl glycine. Cys4 carries S-palmitoyl cysteine lipidation. Positions 8-48 (FSSSSPSKTGLHSHATTNNHSNGTEFSSTTGATTNSSVGQQ) are disordered. Residues 15–48 (KTGLHSHATTNNHSNGTEFSSTTGATTNSSVGQQ) show a composition bias toward polar residues. Residues 86 to 368 (FKPDSMLGQG…KEVVEVLEHI (283 aa)) form the Protein kinase domain. Position 92-100 (92-100 (LGQGGFGKV)) interacts with ATP. Residue Ser117 is modified to Phosphoserine. Lys124 is a binding site for ATP. At Tyr169 the chain carries Phosphotyrosine. Asp218 acts as the Proton acceptor in catalysis. A Phosphoserine modification is found at Ser222. Phosphothreonine occurs at positions 253 and 258. At Tyr266 the chain carries Phosphotyrosine. The segment covering 378–390 (SSTKQAVANSSRS) has biased composition (polar residues). Residues 378 to 419 (SSTKQAVANSSRSSPHHYRYKAGALGAERKRATPGRFGSVEK) form a disordered region.

Belongs to the protein kinase superfamily. Ser/Thr protein kinase family. As to quaternary structure, interacts with SOBIR1/EVR and RLK5/HAE. In terms of processing, autophosphorylated on serine, threonine and tyrosine residues.

Its subcellular location is the cell membrane. It localises to the nucleus. It carries out the reaction L-seryl-[protein] + ATP = O-phospho-L-seryl-[protein] + ADP + H(+). The enzyme catalyses L-threonyl-[protein] + ATP = O-phospho-L-threonyl-[protein] + ADP + H(+). In terms of biological role, acts as a spatial inhibitor of signaling that modulates abscission zone cell adhesion and expansion. Acts both directly and indirectly by physically interacting with RLK5/HAE and SOBIR1/EVR at the cell surface. The polypeptide is Probable serine/threonine-protein kinase CST (Arabidopsis thaliana (Mouse-ear cress)).